Reading from the N-terminus, the 2431-residue chain is Nucleoprotein TPR (2431 aa).

The segment at 1–48 is disordered; it reads MTSGGSASRSGHRGVPMTSRGFDGSRRGSLRRAGARETASEAADGAAP. Residues 77-87 are sufficient for interaction with TPR; the sequence is AVLQQVLERPE. The necessary for interaction with HSF1 stretch occupies residues 88 to 191; that stretch reads LNKLPKSTQN…GIQSQFTRAK (104 aa). Positions 98 to 444 form a coiled coil; the sequence is KLEKFLAEQQ…SATKRKGAIL (347 aa). Residues K326, K386, and K419 each carry the N6-acetyllysine modification. S453 is subject to Phosphoserine. Residues 486–678 adopt a coiled-coil conformation; that stretch reads EKQENKRINK…ESRQHQMQLV (193 aa). K502, K531, and K551 each carry N6-acetyllysine. The necessary for association to the NPC stretch occupies residues 511–587; that stretch reads LKRQREEYER…LMELEEARGN (77 aa). 3 positions are modified to phosphoserine: S596, S597, and S706. Residues 736-1246 are a coiled coil; it reads STEAIEAKAA…IEKLSDKVVT (511 aa). Residues K787, K797, K822, and K829 each carry the N6-acetyllysine modification. Residues 989–998 are compositionally biased toward polar residues; it reads LASQSTQRTG. Residues 989 to 1011 form a disordered region; that stretch reads LASQSTQRTGKGQPGDRDDVDDL. A compositionally biased stretch (basic and acidic residues) spans 1002–1011; sequence PGDRDDVDDL. S1259 carries the phosphoserine modification. Coiled coils occupy residues 1289-1494 and 1547-1700; these read EVAQ…LDAK and VQEM…QRDE. Residues 1292 to 1394 form a necessary for interaction with HSF1 region; sequence QVESLRYRQR…NAELSEKSGM (103 aa). Basic and acidic residues predominate over residues 1689 to 1701; sequence EHQERHLEQRDEP. Residues 1689–1744 form a disordered region; that stretch reads EHQERHLEQRDEPQEPTNKAPEQQRQITLKTTPASGERGIASTSDPPTANIKPTPV. A compositionally biased stretch (polar residues) spans 1703–1722; it reads EPTNKAPEQQRQITLKTTPA. Residue K1760 is modified to N6-acetyllysine. The residue at position 1762 (T1762) is a Phosphothreonine. Positions 1873–1898 are enriched in polar residues; that stretch reads SSPVERPSTSTAVFGTVSATPSSSLP. The interval 1873 to 2193 is disordered; it reads SSPVERPSTS…TPGIGGMQQH (321 aa). The sufficient and essential for mediating its nuclear import stretch occupies residues 1882-1937; it reads STAVFGTVSATPSSSLPKRTREEEEDSTMEAGDQVSEDTVEMPLPKKLKMVTPVGT. The segment covering 1937-1951 has biased composition (acidic residues); it reads TEEEVMAEESTDGEA. Over residues 1954–1963 the composition is skewed to polar residues; it reads QAYNQDSQDS. S1963 is subject to Phosphoserine. A compositionally biased stretch (low complexity) spans 1994–2005; it reads QSDQQTTSSQDG. Acidic residues-rich tracts occupy residues 2016–2057 and 2067–2088; these read DSDD…EDSN and DGYE…ETEE. Polar residues predominate over residues 2100–2132; sequence ADSQNSGEGNTSAAESSFSQEVAREQQPTSASE. Phosphoserine is present on residues S2102, S2105, S2116, S2118, and S2141. An omega-N-methylarginine mark is found at R2174 and R2179. Phosphothreonine is present on residues T2184 and T2205. A Phosphoserine modification is found at S2223. R2231 bears the Omega-N-methylarginine mark. Residues 2295 to 2312 are compositionally biased toward polar residues; the sequence is ESTTSDASEHASQSVPMV. The interval 2295–2431 is disordered; the sequence is ESTTSDASEH…RGGINRGNIN (137 aa). Low complexity predominate over residues 2313 to 2325; it reads TTSTGTLSTTNET. Positions 2327-2340 are enriched in acidic residues; the sequence is AGDDGDEVFVEAES. The span at 2341-2351 shows a compositional bias: low complexity; sequence EGISSEAGLEI. The span at 2353–2367 shows a compositional bias: acidic residues; sequence SQQEEEPVQASDESD. The segment covering 2368 to 2388 has biased composition (low complexity); the sequence is LPSTSQDPPSSSSVDTSSSQP. Asymmetric dimethylarginine is present on residues R2411, R2413, and R2422. Residues 2420–2431 show a composition bias toward gly residues; it reads GGRGGINRGNIN.

It belongs to the TPR family. Homodimer. Part of the nuclear pore complex (NPC). Associates with the XPO1/CRM1-mediated nuclear export complex, the Importin alpha/Importin beta receptor and the dynein 1 complex. Interacts (via C-terminal domain) with the KPNB1; the interaction occurs in a RanGTP-dependent manner. Interacts (via C-terminal region and phosphorylated form) with MAPK1/ERK2 (via phosphorylated form); the interaction requires dimerization of MAPK1/ERK2 and increases following EGF stimulation. Interacts with MAPK3/ERK1; the interaction increases following EGF stimulation. Interacts (via coiled coil region) with NUP153; the interaction is direct. Interacts with HSF1; the interaction increases in a stress-responsive manner and stimulates export of stress-induced HSP70 mRNA. Interacts with huntingtin/HTT; the interaction is inhibited by aggregated huntingtin/HTT forms with expanded polyglutamine stretch. Interacts with MAD1L1 (via N-terminal region), MAD2L1, and TTK; the interactions occurs in a microtubule-independent manner. Interacts (via middle region) with DYNLL1. Interacts with DCTN1, dynein, NUP153 and tubulin. Interacts with MTA1. Interacts with IFI204 (via C-terminal region). Interacts with IFI203. Interacts with ZC3HC1; this interaction mediates ZC3HC1 nuclear envelopes (NE)-association but also required for proper positioning of a substantial amount of TPR at the nuclear basket (NB). In terms of processing, phosphorylated. Phosphorylation occurs on serine and threonine residues (comprised in the C-terminal region) by MAPK1/ERK2 and stabilizes the interaction between these two proteins. In terms of tissue distribution, expressed in the heart, liver, kidney, spleen, lung and skeletal muscles.

The protein localises to the nucleus. It is found in the nucleus membrane. It localises to the nucleus envelope. Its subcellular location is the nuclear pore complex. The protein resides in the cytoplasm. The protein localises to the cytoskeleton. It is found in the spindle. It localises to the chromosome. Its subcellular location is the centromere. The protein resides in the kinetochore. In terms of biological role, component of the nuclear pore complex (NPC), a complex required for the trafficking across the nuclear envelope. Functions as a scaffolding element in the nuclear phase of the NPC essential for normal nucleocytoplasmic transport of proteins and mRNAs, plays a role in the establishment of nuclear-peripheral chromatin compartmentalization in interphase, and in the mitotic spindle checkpoint signaling during mitosis. Involved in the quality control and retention of unspliced mRNAs in the nucleus; in association with NUP153, regulates the nuclear export of unspliced mRNA species bearing constitutive transport element (CTE) in a NXF1- and KHDRBS1-independent manner. Negatively regulates both the association of CTE-containing mRNA with large polyribosomes and translation initiation. Does not play any role in Rev response element (RRE)-mediated export of unspliced mRNAs. Implicated in nuclear export of mRNAs transcribed from heat shock gene promoters; associates both with chromatin in the HSP70 promoter and with mRNAs transcribed from this promoter under stress-induced conditions. Plays a limited role in the regulation of nuclear protein export. Modulates the nucleocytoplasmic transport of activated MAPK1/ERK2 and huntingtin/HTT and may serve as a docking site for the XPO1/CRM1-mediated nuclear export complex. Also plays a role as a structural and functional element of the perinuclear chromatin distribution; involved in the formation and/or maintenance of NPC-associated perinuclear heterochromatin exclusion zones (HEZs). Finally, acts as a spatial regulator of the spindle-assembly checkpoint (SAC) response ensuring a timely and effective recruitment of spindle checkpoint proteins like MAD1L1 and MAD2L1 to unattached kinetochore during the metaphase-anaphase transition before chromosome congression. Its N-terminus is involved in activation of oncogenic kinases. The protein is Nucleoprotein TPR of Mus musculus (Mouse).